We begin with the raw amino-acid sequence, 328 residues long: P2Y purinoceptor 3 (328 aa).

Over 1-22 the chain is Extracellular; sequence MSMANFTAGRNSCTFQEEFKQV. N5 carries N-linked (GlcNAc...) asparagine glycosylation. Residues 23 to 43 traverse the membrane as a helical segment; the sequence is LLPLVYSVVFLLGLPLNAVVI. At 44–57 the chain is on the cytoplasmic side; it reads GQIWLARKALTRTT. A helical membrane pass occupies residues 58 to 78; it reads IYMLNLATADLLYVCSLPLLI. Topologically, residues 79 to 96 are extracellular; sequence YNYTQKDYWPFGDFTCKF. C94 and C172 are joined by a disulfide. Residues 97 to 117 form a helical membrane-spanning segment; that stretch reads VRFQFYTNLHGSILFLTCISV. Residues 118-139 lie on the Cytoplasmic side of the membrane; the sequence is QRYMGICHPLASWHKKKGKKLT. The helical transmembrane segment at 140 to 160 threads the bilayer; it reads WLVCAAVWFIVIAQCLPTFVF. Residues 161–189 lie on the Extracellular side of the membrane; the sequence is ASTGTQRNRTVCYDLSPPDRSASYFPYGI. Residues 190–210 form a helical membrane-spanning segment; the sequence is TLTITGFLLPFAAILACYCSM. Residues 211–231 are Cytoplasmic-facing; the sequence is ARILCQKDELIGLAVHKKKDK. A helical membrane pass occupies residues 232-252; it reads AVRMIIIVVIVFSISFFPFHL. Residues 253–275 are Extracellular-facing; sequence TKTIYLIVRSSPTLPCPTLQAFA. A helical transmembrane segment spans residues 276-298; that stretch reads IAYKCTRPFASMNSVLDPILFYF. Residues 299–323 lie on the Cytoplasmic side of the membrane; sequence TQRKFRESTRYLLDKMSSKWRHDHC.

The protein belongs to the G-protein coupled receptor 1 family.

Its subcellular location is the cell membrane. Receptor for extracellular UDP &gt; ADP = UTP. The activity of this receptor is mediated by G proteins which activate a phosphatidylinositol-calcium second messenger system. This Meleagris gallopavo (Wild turkey) protein is P2Y purinoceptor 3 (P2RY3).